The primary structure comprises 416 residues: Serine hydroxymethyltransferase (416 aa).

(6S)-5,6,7,8-tetrahydrofolate contacts are provided by residues leucine 121 and 125-127 (GHL). Position 229 is an N6-(pyridoxal phosphate)lysine (lysine 229). Residues glutamate 245 and 354–356 (SPF) contribute to the (6S)-5,6,7,8-tetrahydrofolate site.

The protein belongs to the SHMT family. In terms of assembly, homodimer. The cofactor is pyridoxal 5'-phosphate.

Its subcellular location is the cytoplasm. It catalyses the reaction (6R)-5,10-methylene-5,6,7,8-tetrahydrofolate + glycine + H2O = (6S)-5,6,7,8-tetrahydrofolate + L-serine. Its pathway is one-carbon metabolism; tetrahydrofolate interconversion. It participates in amino-acid biosynthesis; glycine biosynthesis; glycine from L-serine: step 1/1. In terms of biological role, catalyzes the reversible interconversion of serine and glycine with tetrahydrofolate (THF) serving as the one-carbon carrier. This reaction serves as the major source of one-carbon groups required for the biosynthesis of purines, thymidylate, methionine, and other important biomolecules. Also exhibits THF-independent aldolase activity toward beta-hydroxyamino acids, producing glycine and aldehydes, via a retro-aldol mechanism. The protein is Serine hydroxymethyltransferase of Aliivibrio fischeri (strain ATCC 700601 / ES114) (Vibrio fischeri).